A 713-amino-acid polypeptide reads, in one-letter code: MTLFKKIQWFCNLIRLRSYYKFLLLIAYTAFGAWLFRTYELQADIKRRSVFGNTTNLVRRQLAERWIEMHKDAVLRNDSALRFRRAAEAVEWLLDELNLSDHIRDLSEETPWTWTGAMFYAGQLYTTIGYGYPTTKTDEGRICTIFYALFGIPCFLMYLKIENAIEWKKDKQLGKRALKMHGLINDSFQSIGKTLSKKMKKYYKKLRRSRVGRILLPTRVTAMKDGFEDPEAAEERKKKPFPIPIAIIMLIIWICFSASMFCIWEDTWVFSSAVYFFIVSISTVGLGDMLFRTPDMMVFNFLLILVGLALLSMCFELITDRVAKWKQKRFDEHIKKVQKMAFQVFEKDPFIEEAPPLGIRMAPNLMQIAATHVSEEKRGFFAEFKDWFAGKVTDNVIQSKLEDSDDESDSEEALEEFDSPQIATVTANDLIVCSNGAATRRVSKQSYALSDISNLSNSKILPGNNYGQLLDRIKAMEKFKPKKNDLDSRMFAKFLENKKLAKILEQTELRELATVSCQTDLSGLVVQRRNPKGRHARIGSCSSQSTMSTLLPNKMHAPDEDSVMSFTFGDLKFDYKTEPFIDEYYIRESNHSIFDFDEDETVRIPQKMLISRPGMPPPPPSRPLNLASPLRTLLEKEQKYDEDPEIQLTPRRLNSLSDIQARKVKLGVDENLQHARLVCGLLPQDFDSPSTSTSTSMIDSGYELSKRDASTMA.

Over 1–15 (MTLFKKIQWFCNLIR) the chain is Cytoplasmic. Residues 16-36 (LRSYYKFLLLIAYTAFGAWLF) traverse the membrane as a helical segment. Residues Asn-53, Asn-77, and Asn-98 are each glycosylated (N-linked (GlcNAc...) asparagine). The pore-forming intramembrane region spans 112-132 (WTWTGAMFYAGQLYTTIGYGY). The chain crosses the membrane as a helical span at residues 142–162 (ICTIFYALFGIPCFLMYLKIE). The Cytoplasmic portion of the chain corresponds to 163–242 (NAIEWKKDKQ…AEERKKKPFP (80 aa)). The chain crosses the membrane as a helical span at residues 243 to 263 (IPIAIIMLIIWICFSASMFCI). The pore-forming intramembrane region spans 267–287 (TWVFSSAVYFFIVSISTVGLG). A helical membrane pass occupies residues 298–318 (VFNFLLILVGLALLSMCFELI). At 319–713 (TDRVAKWKQK…LSKRDASTMA (395 aa)) the chain is on the cytoplasmic side.

Belongs to the two pore domain potassium channel (TC 1.A.1.8) family.

The protein resides in the membrane. The polypeptide is TWiK family of potassium channels protein 12 (twk-12) (Caenorhabditis elegans).